Here is a 464-residue protein sequence, read N- to C-terminus: Siroheme synthase (464 aa).

Residues 1 to 203 (MDYLPLFHNL…GQETEAERLL (203 aa)) are precorrin-2 dehydrogenase /sirohydrochlorin ferrochelatase. NAD(+) is bound by residues 22–23 (EI) and 43–44 (PQ). Serine 128 is modified (phosphoserine). The tract at residues 216 to 464 (GEVYLVGAGP…AWFEGRQSAD (249 aa)) is uroporphyrinogen-III C-methyltransferase. Position 225 (proline 225) interacts with S-adenosyl-L-methionine. Aspartate 248 functions as the Proton acceptor in the catalytic mechanism. Catalysis depends on lysine 270, which acts as the Proton donor. Residues 301-303 (GGD), isoleucine 306, 331-332 (TA), methionine 383, and glycine 412 each bind S-adenosyl-L-methionine.

In the N-terminal section; belongs to the precorrin-2 dehydrogenase / sirohydrochlorin ferrochelatase family. It in the C-terminal section; belongs to the precorrin methyltransferase family.

The catalysed reaction is uroporphyrinogen III + 2 S-adenosyl-L-methionine = precorrin-2 + 2 S-adenosyl-L-homocysteine + H(+). It catalyses the reaction precorrin-2 + NAD(+) = sirohydrochlorin + NADH + 2 H(+). The enzyme catalyses siroheme + 2 H(+) = sirohydrochlorin + Fe(2+). It participates in cofactor biosynthesis; adenosylcobalamin biosynthesis; precorrin-2 from uroporphyrinogen III: step 1/1. The protein operates within cofactor biosynthesis; adenosylcobalamin biosynthesis; sirohydrochlorin from precorrin-2: step 1/1. It functions in the pathway porphyrin-containing compound metabolism; siroheme biosynthesis; precorrin-2 from uroporphyrinogen III: step 1/1. Its pathway is porphyrin-containing compound metabolism; siroheme biosynthesis; siroheme from sirohydrochlorin: step 1/1. It participates in porphyrin-containing compound metabolism; siroheme biosynthesis; sirohydrochlorin from precorrin-2: step 1/1. Multifunctional enzyme that catalyzes the SAM-dependent methylations of uroporphyrinogen III at position C-2 and C-7 to form precorrin-2 via precorrin-1. Then it catalyzes the NAD-dependent ring dehydrogenation of precorrin-2 to yield sirohydrochlorin. Finally, it catalyzes the ferrochelation of sirohydrochlorin to yield siroheme. This Azotobacter vinelandii (strain DJ / ATCC BAA-1303) protein is Siroheme synthase.